Here is a 1469-residue protein sequence, read N- to C-terminus: ABC transporter G family member 36 (1469 aa).

At Met-1 the chain carries N-acetylmethionine. A phosphoserine mark is found at Ser-37, Ser-38, and Ser-40. Thr-43 is modified (phosphothreonine). The residue at position 45 (Ser-45) is a Phosphoserine. In terms of domain architecture, ABC transporter 1 spans 171–444; that stretch reads LGMIGIQFAK…FESFGFKCPE (274 aa). 204 to 211 serves as a coordination point for ATP; sequence GPPSSGKT. Positions 522–735 constitute an ABC transmembrane type-2 1 domain; that stretch reads ELLKSCWDKE…AFNGLVVNEM (214 aa). 7 helical membrane-spanning segments follow: residues 540–560, 575–595, 621–641, 659–679, 685–705, 713–733, and 772–792; these read FFYVFKTVQIVIIAAITSTLF, LYIGALLFGMIINMFNGFAEM, LPTFLLGIPSSILESTAWMVV, FLLVFLIQQMAASLFRLIASV, IANTGGALTLLLVFLLGGFLL, WWGWAYWVSPLTYAFNGLVVN, and ISVGALLCFTALFNILFTLAL. The segment at 806–852 is disordered; it reads PEEENEDADQGKDPMRRSLSTADGNRRGEVAMGRMSRDSAAEASGGA. 3 positions are modified to phosphoserine: Ser-825, Ser-841, and Ser-844. Residues 829–845 are compositionally biased toward basic and acidic residues; sequence GNRRGEVAMGRMSRDSA. The ABC transporter 2 domain maps to 867–1119; sequence MSFDDVKYFV…KVVEYFESFP (253 aa). 912-919 provides a ligand contact to ATP; that stretch reads GVSGAGKT. Positions 1192 to 1406 constitute an ABC transmembrane type-2 2 domain; it reads GQFKSCLWKQ…TVYGLIVSQY (215 aa). Transmembrane regions (helical) follow at residues 1216 to 1236, 1239 to 1259, 1299 to 1319, 1326 to 1346, 1356 to 1376, 1384 to 1404, and 1441 to 1461; these read FIFTLATSLLIGTVFWQIGGN, NAGDLTMVIGALYAAIIFVGI, LPYVLIQTVYYSLIVYAMVGF, FFWFVFVSYFSFLYWTYYGMM, VASIFASAFYGIFNLFSGFFI, WWIWYYWICPVAWTVYGLIVS, and PVAAVLIAFTVFFAFIFAFCI.

It belongs to the ABC transporter superfamily. ABCG family. PDR (TC 3.A.1.205) subfamily. As to quaternary structure, interacts, in a Ca(2+)-dependent manner, with calmodulins CaM3, CaM7 and several CaM-like proteins (CML8, CML9, CML12/CAL4, CML37 and CML38), as well as with calcium regulated proteins CBL4/SOS3 and KIC. In terms of processing, phosphorylated upon perception of pathogen-associated molecular patterns (PAMPs); phosphorylations at Ser-40 and Ser-45, which likely regulate transport activity, are required for plant defense against pathogens (e.g. Blumeria graminis), but dispensable for recruitment to the host-pathogen interface and penetration sites. Phosphorylation at Ser-841 seems to be required for protein stability. In terms of tissue distribution, ubiquitous (at protein level). Higher levels in root hairs, stomata, epidermal cells, and hydathodes. Concentrated at the infection site of infected plants, including papillae and haustoria. Accumulates at the periphery of lateral root cap and root epidermal cells, especially in the outer lateral membrane domain facing the environment.

The protein resides in the cell membrane. Its subcellular location is the golgi apparatus. The protein localises to the trans-Golgi network membrane. It is found in the endoplasmic reticulum membrane. Its function is as follows. Together with ABCG37, regulates auxin homeostasis and responses by playing a dual role in coumarin (e.g. esculin) and in the auxin precursor indole 3-butyric acid (IBA) efflux transport, thus influencing cotyledons, roots and root hairs development. Mediates the transport (export into the apoplast) of distinct indole-type metabolites in distinct biological processes; a precursor of 4-O-beta-D-glucosyl-indol-3-yl formamide (4OGlcI3F), a pathogen-inducible tryptophan-derived compound (e.g. upon Blumeria graminis conidiospore inoculation), being a probable substrate in extracellular pathogen defense. Involved in the cellular detoxification of xenobiotics by promoting the excretion of some auxinic herbicides including 4-(2,4-dichlorophenoxy)butyric acid (2,4-DB) and other members of the phenoxyalkanoic acid family but not 2,4-dichlorophenoxyacetic acid (2,4-D). Mediates thymidine exudation in the rhizosphere. May be a transporter of lignin precursors during tracheary element differentiation. Key factor that controls the extent of cell death in the defense response. Necessary for both callose deposition and glucosinolate activation in response to pathogens. As a central component of nonhost resistance (NHR), required for limiting invasion by nonadapted pathogens including powdery mildews (e.g. Blumeria graminis and Erysiphe pisi), root-penetrating pathogenic fungi (e.g. Fusarium oxysporum), Phakopsora pachyrhizi and Colletotrichum gloeosporioides (anthracnose fungi), probably by sensing Ca(2+) via interactions with calmodulins (e.g. CaM7). Confers resistance to cadmium (Cd) and lead (Pb), probably as an efflux pump of Cd2+ or Cd conjugates, and possibly, of chemicals that mediate pathogen resistance. Promotes resistance to abiotic stresses (e.g. drought and salt stress) and favors general growth by preventing sodium accumulation in plants. Required for microbe-associated molecular patterns (MAMPs)- and salicylic acid (SA)-dependent hypersensitive cell death (HR), involving indole glucosinolate breakdown products (e.g. indole-3-acetonitrile), probably in a PEN2 myrosinase-dependent metabolic pathway, triggered by the recognition of effectors from incompatible pathogens including oomycetes and bacteria (e.g. AvrRpm1 and AvrRps4) and benzothiadiazole- (BTH), and leading to an induced protection against pathogens (e.g. Pseudomonas syringae pv. tomato DC3000, Golovinomyces orontii and Hyaloperonospora arabidopsidis). The chain is ABC transporter G family member 36 from Arabidopsis thaliana (Mouse-ear cress).